Consider the following 341-residue polypeptide: HTH-type transcriptional repressor PurR (341 aa).

The HTH lacI-type domain occupies A2–V56. A DNA-binding region (H-T-H motif) is located at residues I4–N23. The DNA-binding element occupies S48–V56. 5 residues coordinate hypoxanthine: Y73, R190, T192, F221, and D275.

As to quaternary structure, homodimer.

The protein operates within purine metabolism; purine nucleotide biosynthesis [regulation]. In terms of biological role, is the main repressor of the genes involved in the de novo synthesis of purine nucleotides, regulating purB, purC, purEK, purF, purHD, purL, purMN and guaBA expression. PurR is allosterically activated to bind its cognate DNA by binding the purine corepressors, hypoxanthine or guanine, thereby effecting transcription repression. In Salmonella typhi, this protein is HTH-type transcriptional repressor PurR.